We begin with the raw amino-acid sequence, 224 residues long: Lipoprotein-releasing system ATP-binding protein LolD (224 aa).

The region spanning 6–224 (VRLRELRRSF…VVRLHEGVLE (219 aa)) is the ABC transporter domain. Residue 42–49 (GPSGSGKS) coordinates ATP.

The protein belongs to the ABC transporter superfamily. Lipoprotein translocase (TC 3.A.1.125) family. As to quaternary structure, the complex is composed of two ATP-binding proteins (LolD) and two transmembrane proteins (LolC and LolE).

Its subcellular location is the cell inner membrane. Functionally, part of the ABC transporter complex LolCDE involved in the translocation of mature outer membrane-directed lipoproteins, from the inner membrane to the periplasmic chaperone, LolA. Responsible for the formation of the LolA-lipoprotein complex in an ATP-dependent manner. The sequence is that of Lipoprotein-releasing system ATP-binding protein LolD from Novosphingobium aromaticivorans (strain ATCC 700278 / DSM 12444 / CCUG 56034 / CIP 105152 / NBRC 16084 / F199).